Consider the following 193-residue polypeptide: Ion-translocating oxidoreductase complex subunit A (193 aa).

Helical transmembrane passes span 5-25 (LLLL…FLGL), 39-59 (IGMG…SYLI), 63-83 (ILAP…VIAV), 102-122 (VLGI…VALL), 134-154 (IIYG…FSAM), and 171-191 (SIAM…TGLV).

It belongs to the NqrDE/RnfAE family. The complex is composed of six subunits: RnfA, RnfB, RnfC, RnfD, RnfE and RnfG.

The protein localises to the cell inner membrane. In terms of biological role, part of a membrane-bound complex that couples electron transfer with translocation of ions across the membrane. The chain is Ion-translocating oxidoreductase complex subunit A from Aliivibrio salmonicida (strain LFI1238) (Vibrio salmonicida (strain LFI1238)).